Reading from the N-terminus, the 355-residue chain is Anthranilate phosphoribosyltransferase (355 aa).

Residues Gly102, 105–106 (GD), Ser110, 112–115 (NIST), 130–138 (KHGNRSVSS), and Ser142 contribute to the 5-phospho-alpha-D-ribose 1-diphosphate site. Gly102 is a binding site for anthranilate. Ser114 is a Mg(2+) binding site. Anthranilate is bound at residue Asn133. Arg188 provides a ligand contact to anthranilate. Mg(2+)-binding residues include Asp246 and Glu247.

This sequence belongs to the anthranilate phosphoribosyltransferase family. Homodimer. Requires Mg(2+) as cofactor.

It catalyses the reaction N-(5-phospho-beta-D-ribosyl)anthranilate + diphosphate = 5-phospho-alpha-D-ribose 1-diphosphate + anthranilate. The protein operates within amino-acid biosynthesis; L-tryptophan biosynthesis; L-tryptophan from chorismate: step 2/5. Functionally, catalyzes the transfer of the phosphoribosyl group of 5-phosphorylribose-1-pyrophosphate (PRPP) to anthranilate to yield N-(5'-phosphoribosyl)-anthranilate (PRA). This chain is Anthranilate phosphoribosyltransferase, found in Pectobacterium carotovorum subsp. carotovorum (strain PC1).